Consider the following 192-residue polypeptide: uncharacterized protein (192 aa).

An N-terminal signal peptide occupies residues 1 to 24; it reads MSGVLSCVLRACACAGLCCWVCMG. The interval 140–192 is disordered; it reads RAGADEGAGGNAAGCPEDTRGFARSPGDLMGGMNGDLGDEGETGEGGDNGAGE.

This is an uncharacterized protein from Human herpesvirus 6A (strain Uganda-1102) (HHV-6 variant A).